The primary structure comprises 290 residues: Protease HtpX (290 aa).

A run of 2 helical transmembrane segments spans residues 4-24 (IFLF…TLKL) and 36-56 (GSLL…SLFI). His-142 contacts Zn(2+). Glu-143 is a catalytic residue. His-146 is a binding site for Zn(2+). Helical transmembrane passes span 150-170 (GDMV…MFFA) and 193-213 (FVAT…IVMW). Glu-219 is a binding site for Zn(2+).

This sequence belongs to the peptidase M48B family. Requires Zn(2+) as cofactor.

It localises to the cell inner membrane. In Stutzerimonas stutzeri (strain A1501) (Pseudomonas stutzeri), this protein is Protease HtpX.